A 282-amino-acid chain; its full sequence is Phosphatidylglycerol--prolipoprotein diacylglyceryl transferase (282 aa).

A run of 3 helical transmembrane segments spans residues 18–38, 56–76, and 89–109; these read IQVH…VALA, ILWA…IFQW, and IWDG…VVIL. Arg-137 contributes to the a 1,2-diacyl-sn-glycero-3-phospho-(1'-sn-glycerol) binding site. Residues 237–257 traverse the membrane as a helical segment; it reads VIRVSQALSVVLFFGSIGLMI.

It belongs to the Lgt family.

Its subcellular location is the cell membrane. It catalyses the reaction L-cysteinyl-[prolipoprotein] + a 1,2-diacyl-sn-glycero-3-phospho-(1'-sn-glycerol) = an S-1,2-diacyl-sn-glyceryl-L-cysteinyl-[prolipoprotein] + sn-glycerol 1-phosphate + H(+). It participates in protein modification; lipoprotein biosynthesis (diacylglyceryl transfer). Its function is as follows. Catalyzes the transfer of the diacylglyceryl group from phosphatidylglycerol to the sulfhydryl group of the N-terminal cysteine of a prolipoprotein, the first step in the formation of mature lipoproteins. This is Phosphatidylglycerol--prolipoprotein diacylglyceryl transferase from Lactiplantibacillus plantarum (strain ATCC BAA-793 / NCIMB 8826 / WCFS1) (Lactobacillus plantarum).